The following is a 367-amino-acid chain: Peroxisome biogenesis protein 16 (367 aa).

Positions 135–173 (GGETPNEEKDSNQSESQNRAGNSGRNLGPHGLGNQNHHN) are disordered. Polar residues predominate over residues 147–159 (QSESQNRAGNSGR). The next 2 membrane-spanning stretches (helical) occupy residues 237 to 257 (ALFA…VLFI) and 264 to 284 (SWIP…LLAN).

It belongs to the peroxin-16 family. As to quaternary structure, interacts with APEM9 (via both N- and C-terminus). Post-translationally, the detection of an additional immunorelated polypeptide of 52 kDa suggests a post-translational modification of PEX16. As to expression, expressed in roots, siliques, seeds, cotyledons, leaves and flowers. Low expression in leaves and roots.

The protein resides in the peroxisome membrane. The protein localises to the endoplasmic reticulum membrane. Its function is as follows. Involved in the formation of peroxisomes, lipid bodies and protein bodies. The chain is Peroxisome biogenesis protein 16 from Arabidopsis thaliana (Mouse-ear cress).